A 1083-amino-acid chain; its full sequence is Error-prone DNA polymerase (1083 aa).

Belongs to the DNA polymerase type-C family. DnaE2 subfamily.

The protein resides in the cytoplasm. The enzyme catalyses DNA(n) + a 2'-deoxyribonucleoside 5'-triphosphate = DNA(n+1) + diphosphate. Its function is as follows. DNA polymerase involved in damage-induced mutagenesis and translesion synthesis (TLS). It is not the major replicative DNA polymerase. The protein is Error-prone DNA polymerase of Xanthomonas oryzae pv. oryzae (strain KACC10331 / KXO85).